Consider the following 143-residue polypeptide: uncharacterized protein (143 aa).

An HTH cro/C1-type domain is found at 24–78; sequence IRQRREWQNMSQTTLGEAIGVTFQQVQKYEKGVNRVGAGRLQQISKALKVEPSYF. Positions 35-54 form a DNA-binding region, H-T-H motif; it reads QTTLGEAIGVTFQQVQKYEK.

This is an uncharacterized protein from Sinorhizobium fredii (strain NBRC 101917 / NGR234).